The sequence spans 405 residues: Potassium channel subfamily K member 18 (405 aa).

The chain crosses the membrane as a helical span at residues 43–63; the sequence is LPGLCFLCCLVTYALVGAALF. The N-linked (GlcNAc...) asparagine glycan is linked to N94. The segment at residues 125 to 151 is an intramembrane region (pore-forming); it reads FLSALFFCCTVFSTVGYGHMYPVTRLG. 4 residues coordinate K(+): T138, V139, G140, and Y141. The segment at 138–143 is selectivity filter 1; that stretch reads TVGYGH. A helical membrane pass occupies residues 153 to 173; the sequence is FLCMLYALFGIPLMFLVLTDI. The interval 221–226 is interaction with calcineurin; that stretch reads PQIVID. The segment at 272–277 is interaction with YWHAH; that stretch reads RSNSCP. Phosphoserine is present on residues S275 and S287. The chain crosses the membrane as a helical span at residues 304-324; the sequence is IPLPVIALVIFAYISCAAAIL. The pore-forming intramembrane region spans 337–351; sequence FYFCFVTLTTIGFGD. The tract at residues 346–351 is selectivity filter 2; the sequence is TIGFGD. The chain crosses the membrane as a helical span at residues 358 to 378; that stretch reads HFFLFFSIYIIVGMEILFIAF.

Belongs to the two pore domain potassium channel (TC 1.A.1.8) family. As to quaternary structure, homodimer. Heterodimer with KCNK2. Heterodimer with KCNK10. Interacts with calcineurin. Interacts with YWHAH, in a phosphorylation-dependent manner. In terms of processing, phosphorylation of Ser-275 is required for the binding of 14-3-3eta/YWHAH. Calcineurin-mediated dephosphorylation of Ser-287 enhances channel activity. N-glycosylated.

It localises to the cell membrane. The enzyme catalyses K(+)(in) = K(+)(out). Activated by volatile anesthetics, such as isoflurane and inhibited by local anesthetics such as bupivacaine and lidocaine. Inhibited by extracellular acidic pH. Inhibited by Zn(2+) ions. Functionally, k(+) channel that conducts outward and inward rectifying currents at depolarized and hyperpolarized membrane potentials, respectively. The outward rectifying currents are voltage-dependent, coupled to K(+) electrochemical gradient across the membrane, whereas the inward currents can be induced in response to activation of Ca(2+)-mobilizing receptors. Homo- and heterodimerizes to form functional channels with distinct regulatory and gating properties. In trigeminal ganglia sensory neurons, the heterodimers of KCNK18/TRESK and KCNK2/TREK-1 or KCNK10/TREK-2 inhibit neuronal firing and neurogenic inflammation by stabilizing the resting membrane potential at K(+) equilibrium potential as well as by regulating the threshold of action potentials and the spike frequency. In thymocytes, conducts K(+) currents upon T cell receptor (TCR) signaling leading to sustained Ca(2+) influx and NF-kappa-B activation, FOXP3 transcription and positive selection of regulatory T cell (Treg) progenitor subsets. Appears to mediate the analgesics effects of hydroxy-alpha-sanshool, a metabolite naturally present in Schezuan pepper and other Xanthoxylum plants. This is Potassium channel subfamily K member 18 (Kcnk18) from Rattus norvegicus (Rat).